The sequence spans 303 residues: Proteasome subunit beta (303 aa).

A propeptide spans 1 to 67 (MTWQFPDRLS…SGGTGQLPHG (67 aa)) (removed in mature form; by autocatalysis). Thr68 functions as the Nucleophile in the catalytic mechanism.

The protein belongs to the peptidase T1B family. In terms of assembly, the 20S proteasome core is composed of 14 alpha and 14 beta subunits that assemble into four stacked heptameric rings, resulting in a barrel-shaped structure. The two inner rings, each composed of seven catalytic beta subunits, are sandwiched by two outer rings, each composed of seven alpha subunits. The catalytic chamber with the active sites is on the inside of the barrel. Has a gated structure, the ends of the cylinder being occluded by the N-termini of the alpha-subunits. Is capped by the proteasome-associated ATPase, ARC.

It is found in the cytoplasm. The enzyme catalyses Cleavage of peptide bonds with very broad specificity.. The protein operates within protein degradation; proteasomal Pup-dependent pathway. With respect to regulation, the formation of the proteasomal ATPase ARC-20S proteasome complex, likely via the docking of the C-termini of ARC into the intersubunit pockets in the alpha-rings, may trigger opening of the gate for substrate entry. Interconversion between the open-gate and close-gate conformations leads to a dynamic regulation of the 20S proteasome proteolysis activity. In terms of biological role, component of the proteasome core, a large protease complex with broad specificity involved in protein degradation. The polypeptide is Proteasome subunit beta (Mycobacterium avium (strain 104)).